The chain runs to 334 residues: Atypical chemokine receptor 1 (334 aa).

Residues 1-61 (MGNCLYPVET…CNLLDRSSLP (61 aa)) are Extracellular-facing. 3 N-linked (GlcNAc...) asparagine glycosylation sites follow: N16, N26, and N32. Intrachain disulfides connect C49–C274 and C127–C193. Residues 62 to 82 (FFMLTSVLGMLASGSILFAIL) form a helical membrane-spanning segment. Residues 83 to 93 (RPFFHWQICPS) are Cytoplasmic-facing. A helical transmembrane segment spans residues 94-114 (WPILAELAVGSALFSIAVPIL). At 115–127 (APGLHSAHSTALC) the chain is on the extracellular side. The helical transmembrane segment at 128 to 151 (NLGYWVWYTSAFAQALLIGCYACL) threads the bilayer. At 152–164 (NPRLNIGQLRGFT) the chain is on the cytoplasmic side. A helical membrane pass occupies residues 165–185 (LGLSVGLWGAAALSGLPVALA). At 186–205 (SDVYNGFCTFPSSRDMEALK) the chain is on the extracellular side. A helical membrane pass occupies residues 206–226 (YTHYAICFTIFTVLPLTLLAA). Residues 227–242 (KGLKIALSKGPGPWVS) are Cytoplasmic-facing. A helical membrane pass occupies residues 243–263 (VLWIWFIFWWPHGMVLIFDAL). Residues 264 to 285 (VRSKTVLLYTCQSQKILDAMLN) lie on the Extracellular side of the membrane. Residue N285 is glycosylated (N-linked (GlcNAc...) asparagine). The helical transmembrane segment at 286–306 (VTEALSMLHCVATPLLLALFC) threads the bilayer. At 307-334 (HQTTRRSLSSLSLPTRQASQMDALAGKS) the chain is on the cytoplasmic side.

It belongs to the G-protein coupled receptor 1 family. Atypical chemokine receptor subfamily. Expressed in liver and brain.

Its subcellular location is the early endosome. The protein localises to the recycling endosome. It is found in the membrane. Functionally, atypical chemokine receptor that controls chemokine levels and localization via high-affinity chemokine binding that is uncoupled from classic ligand-driven signal transduction cascades, resulting instead in chemokine sequestration, degradation, or transcytosis. Also known as interceptor (internalizing receptor) or chemokine-scavenging receptor or chemokine decoy receptor. Has a promiscuous chemokine-binding profile, interacting with inflammatory chemokines of both the CXC and the CC subfamilies but not with homeostatic chemokines. Acts as a receptor for chemokines including CCL2, CCL5, CCL7, CCL11, CCL13, CCL14, CCL17, CXCL5, CXCL6, IL8/CXCL8, CXCL11, GRO, RANTES, MCP-1 and TARC. May regulate chemokine bioavailability and, consequently, leukocyte recruitment through two distinct mechanisms: when expressed in endothelial cells, it sustains the abluminal to luminal transcytosis of tissue-derived chemokines and their subsequent presentation to circulating leukocytes; when expressed in erythrocytes, serves as blood reservoir of cognate chemokines but also as a chemokine sink, buffering potential surges in plasma chemokine levels. (Microbial infection) Acts as a receptor for the malaria parasite Plasmodium yoelii in mature erythrocytes but not reticulocytes. In Mus musculus (Mouse), this protein is Atypical chemokine receptor 1 (Ackr1).